The primary structure comprises 374 residues: MADSRDEPLVLGIETSCDETGVGVVRGTTLLADAVASSVDEHARFGGVVPEVASRAHLEAMVPTIDRALKEAGVSARDLDGIAVTAGPGLAGALLVGVSAAKAYAYALGKPLYGVNHLASHICVDQLEHGALPEPTMALLVSGGHSSLLLSTDITSDVRPLGATIDDAAGEAFDKIARVLNLGFPGGPVIDRYAREGDPNAIAFPRGLTGPRDAAYDFSFSGLKTAVARWIEAKRAAGEEVPVRDVSASFQEAVVDVLTRKAVRACKDEGVDHLMIGGGVAANSRLRALAQERCEAAGIRLRVPRPKLCTDNGAMVAALGAEMVARNRAASDWDLSADSSLPVTEPHVPGQGHPHGHPHGHDHVHEVSKENLYS.

Residues histidine 117 and histidine 121 each coordinate Fe cation. Substrate is bound by residues leucine 140 to glycine 144, aspartate 174, glycine 187, aspartate 191, and asparagine 283. Residue aspartate 311 coordinates Fe cation. The segment covering alanine 337–glycine 352 has biased composition (low complexity). Positions alanine 337–serine 374 are disordered. Residues histidine 359–serine 374 show a composition bias toward basic and acidic residues.

This sequence belongs to the KAE1 / TsaD family. Fe(2+) is required as a cofactor.

It localises to the cytoplasm. It carries out the reaction L-threonylcarbamoyladenylate + adenosine(37) in tRNA = N(6)-L-threonylcarbamoyladenosine(37) in tRNA + AMP + H(+). Functionally, required for the formation of a threonylcarbamoyl group on adenosine at position 37 (t(6)A37) in tRNAs that read codons beginning with adenine. Is involved in the transfer of the threonylcarbamoyl moiety of threonylcarbamoyl-AMP (TC-AMP) to the N6 group of A37, together with TsaE and TsaB. TsaD likely plays a direct catalytic role in this reaction. The protein is tRNA N6-adenosine threonylcarbamoyltransferase of Streptomyces coelicolor (strain ATCC BAA-471 / A3(2) / M145).